The following is a 700-amino-acid chain: Polyribonucleotide nucleotidyltransferase (700 aa).

Positions 485 and 491 each coordinate Mg(2+). The KH domain maps to 552–611 (PRITVIKINPEKIRDVIGKGGAVIRALTEETGTTIELEDDGTVKIASSNGEATKEAIRRI). Residues 621 to 689 (GRIYNGKVIR…RQGRVRLSIK (69 aa)) enclose the S1 motif domain.

It belongs to the polyribonucleotide nucleotidyltransferase family. In terms of assembly, component of the RNA degradosome, which is a multiprotein complex involved in RNA processing and mRNA degradation. Mg(2+) serves as cofactor.

Its subcellular location is the cytoplasm. It carries out the reaction RNA(n+1) + phosphate = RNA(n) + a ribonucleoside 5'-diphosphate. In terms of biological role, involved in mRNA degradation. Catalyzes the phosphorolysis of single-stranded polyribonucleotides processively in the 3'- to 5'-direction. The sequence is that of Polyribonucleotide nucleotidyltransferase from Shewanella baltica (strain OS185).